The following is a 153-amino-acid chain: Aspartate carbamoyltransferase regulatory chain (153 aa).

Zn(2+) contacts are provided by Cys109, Cys114, Cys138, and Cys141.

Belongs to the PyrI family. As to quaternary structure, contains catalytic and regulatory chains. Zn(2+) serves as cofactor.

Functionally, involved in allosteric regulation of aspartate carbamoyltransferase. This chain is Aspartate carbamoyltransferase regulatory chain, found in Cenarchaeum symbiosum (strain A).